Here is a 423-residue protein sequence, read N- to C-terminus: G protein-activated inward rectifier potassium channel 2 (423 aa).

Topologically, residues 1 to 89 (MAKLTESMTN…IFTTLVDLKW (89 aa)) are cytoplasmic. Phosphoserine occurs at positions 16 and 23. A helical membrane pass occupies residues 90-114 (RFNLLIFVMVYTVTWLFFGMIWWLI). Over 115–138 (AYIRGDMDHIEDPSWTPCVTNLNG) the chain is Extracellular. Positions 139-150 (FVSAFLFSIETE) form an intramembrane region, helical; Pore-forming. An intramembrane region (pore-forming) is located at residues 151–157 (TTIGYGY). The short motif at 152–157 (TIGYGY) is the Selectivity filter element. The Extracellular segment spans residues 158 to 166 (RVITDKCPE). The helical transmembrane segment at 167–188 (GIILLLIQSVLGSIVNAFMVGC) threads the bilayer. Residues 189–423 (MFVKISQPKK…VANLENESKV (235 aa)) are Cytoplasmic-facing. The tract at residues 390–423 (NQHAELETEEEEKNLEEQTERNGDVANLENESKV) is disordered. Residues 420–423 (ESKV) carry the PDZ-binding motif.

This sequence belongs to the inward rectifier-type potassium channel (TC 1.A.2.1) family. KCNJ6 subfamily. As to quaternary structure, associates with KCNJ3/GIRK1 or KCNJ5/GRIK4 to form a G-protein-activated heteromultimer pore-forming unit. The resulting inward current is much larger. Interacts (via PDZ-binding motif) with SNX27 (via PDZ domain); the interaction is required when endocytosed to prevent degradation in lysosomes and promote recycling to the plasma membrane. In terms of tissue distribution, most abundant in cerebellum, and to a lesser degree in islets and exocrine pancreas.

It localises to the membrane. It carries out the reaction K(+)(in) = K(+)(out). Activated by phosphatidylinositol 4,5 biphosphate (PtdIns(4,5)P2). Inward rectifier potassium channels are characterized by a greater tendency to allow potassium to flow into the cell rather than out of it. Their voltage dependence is regulated by the concentration of extracellular potassium; as external potassium is raised, the voltage range of the channel opening shifts to more positive voltages. The inward rectification is mainly due to the blockage of outward current by internal magnesium. This potassium channel may be involved in the regulation of insulin secretion by glucose and/or neurotransmitters acting through G-protein-coupled receptors. The protein is G protein-activated inward rectifier potassium channel 2 (KCNJ6) of Homo sapiens (Human).